The sequence spans 146 residues: ATP synthase epsilon chain (146 aa).

Positions 103–122 are disordered; that stretch reads SAKKRAEQHMQEAKEKHNER.

Belongs to the ATPase epsilon chain family. In terms of assembly, F-type ATPases have 2 components, CF(1) - the catalytic core - and CF(0) - the membrane proton channel. CF(1) has five subunits: alpha(3), beta(3), gamma(1), delta(1), epsilon(1). CF(0) has three main subunits: a, b and c.

The protein localises to the cell membrane. Its function is as follows. Produces ATP from ADP in the presence of a proton gradient across the membrane. This is ATP synthase epsilon chain from Lactobacillus johnsonii (strain CNCM I-12250 / La1 / NCC 533).